The primary structure comprises 517 residues: ATP synthase subunit beta (517 aa).

2 stretches are compositionally biased toward low complexity: residues 1–22 (MAKA…AAKA) and 29–42 (AKTA…APKA). The segment at 1–42 (MAKAATPKTTAAAEAKPAAAKAPAKKAPAKTAAAKSDAAPKA) is disordered. An ATP-binding site is contributed by 195 to 202 (GGAGVGKT).

The protein belongs to the ATPase alpha/beta chains family. In terms of assembly, F-type ATPases have 2 components, CF(1) - the catalytic core - and CF(0) - the membrane proton channel. CF(1) has five subunits: alpha(3), beta(3), gamma(1), delta(1), epsilon(1). CF(0) has three main subunits: a(1), b(2) and c(9-12). The alpha and beta chains form an alternating ring which encloses part of the gamma chain. CF(1) is attached to CF(0) by a central stalk formed by the gamma and epsilon chains, while a peripheral stalk is formed by the delta and b chains.

Its subcellular location is the cell inner membrane. It catalyses the reaction ATP + H2O + 4 H(+)(in) = ADP + phosphate + 5 H(+)(out). In terms of biological role, produces ATP from ADP in the presence of a proton gradient across the membrane. The catalytic sites are hosted primarily by the beta subunits. The sequence is that of ATP synthase subunit beta from Brucella anthropi (strain ATCC 49188 / DSM 6882 / CCUG 24695 / JCM 21032 / LMG 3331 / NBRC 15819 / NCTC 12168 / Alc 37) (Ochrobactrum anthropi).